Here is a 108-residue protein sequence, read N- to C-terminus: Replication restart protein PriB (108 aa).

The SSB domain maps to 8 to 108 (IDNRFSVMGV…LHAEQIEFID (101 aa)).

The protein belongs to the PriB family. In terms of assembly, homodimer. Interacts with PriA and DnaT. Component of the replication restart primosome. Primosome assembly occurs via a 'hand-off' mechanism. PriA binds to replication forks, subsequently PriB then DnaT bind; DnaT then displaces ssDNA to generate the helicase loading substrate.

Involved in the restart of stalled replication forks, which reloads the replicative helicase on sites other than the origin of replication; the PriA-PriB pathway is the major replication restart pathway. During primosome assembly it facilitates complex formation between PriA and DnaT on DNA; stabilizes PriA on DNA. Stimulates the DNA unwinding activity of PriA helicase. The chain is Replication restart protein PriB from Haemophilus influenzae (strain 86-028NP).